The primary structure comprises 130 residues: Small ribosomal subunit protein uS11 (130 aa).

This sequence belongs to the universal ribosomal protein uS11 family. In terms of assembly, part of the 30S ribosomal subunit. Interacts with proteins S7 and S18. Binds to IF-3.

Its function is as follows. Located on the platform of the 30S subunit, it bridges several disparate RNA helices of the 16S rRNA. Forms part of the Shine-Dalgarno cleft in the 70S ribosome. In Syntrophobacter fumaroxidans (strain DSM 10017 / MPOB), this protein is Small ribosomal subunit protein uS11.